A 256-amino-acid chain; its full sequence is Pimeloyl-[acyl-carrier protein] methyl ester esterase (256 aa).

The 228-residue stretch at 15 to 242 (HLVLLHGWGL…AAHAPFISHP (228 aa)) folds into the AB hydrolase-1 domain. Residues W22, 82–83 (SL), and 143–147 (FLALQ) each bind substrate. The active-site Nucleophile is S82. Active-site residues include D207 and H235. H235 contributes to the substrate binding site.

The protein belongs to the AB hydrolase superfamily. Carboxylesterase BioH family. As to quaternary structure, monomer.

It localises to the cytoplasm. It carries out the reaction 6-carboxyhexanoyl-[ACP] methyl ester + H2O = 6-carboxyhexanoyl-[ACP] + methanol + H(+). It participates in cofactor biosynthesis; biotin biosynthesis. The physiological role of BioH is to remove the methyl group introduced by BioC when the pimeloyl moiety is complete. It allows to synthesize pimeloyl-ACP via the fatty acid synthetic pathway through the hydrolysis of the ester bonds of pimeloyl-ACP esters. The polypeptide is Pimeloyl-[acyl-carrier protein] methyl ester esterase (Escherichia coli (strain 55989 / EAEC)).